Reading from the N-terminus, the 369-residue chain is 1-aminocyclopropane-1-carboxylate oxidase homolog 3 (369 aa).

The Fe2OG dioxygenase domain maps to 217–318 (KGLLMLSHYY…VSVACFFTTG (102 aa)). Fe cation is bound by residues histidine 241, aspartate 243, and histidine 297.

Belongs to the iron/ascorbate-dependent oxidoreductase family. It depends on Fe cation as a cofactor.

This chain is 1-aminocyclopropane-1-carboxylate oxidase homolog 3, found in Arabidopsis thaliana (Mouse-ear cress).